The sequence spans 628 residues: Eukaryotic peptide chain release factor GTP-binding subunit ERF3B (628 aa).

Over residues 1 to 10 (MDSGSSSSDS) the composition is skewed to low complexity. Disordered regions lie at residues 1–44 (MDSG…REPL), 71–124 (SFLR…LEGS), and 146–191 (LEES…KSKS). One can recognise a tr-type G domain in the interval 201–425 (KEHVNVVFIG…YLDNLPNFNR (225 aa)). Positions 210–217 (GHVDAGKS) are G1. 213–218 (DAGKST) is a binding site for GTP. Positions 266-270 (GKTVE) are G2. Residues 287–290 (DAPG) form a G3 region. Residues 349-352 (NKMD) and 391-393 (SGL) contribute to the GTP site. Residues 349–352 (NKMD) are G4. Residues 391 to 393 (SGL) form a G5 region.

It belongs to the TRAFAC class translation factor GTPase superfamily. Classic translation factor GTPase family. ERF3 subfamily. Component of the eRF1-eRF3-GTP ternary complex, composed of ETF1/ERF1 and ERF3 (GSPT1/ERF3A or GSPT2/ERF3B) and GTP. Component of the transient SURF (SMG1-UPF1-eRF1-eRF3) complex. Interacts with UPF1 and PABPC1.

The protein localises to the cytoplasm. It catalyses the reaction GTP + H2O = GDP + phosphate + H(+). Its function is as follows. GTPase component of the eRF1-eRF3-GTP ternary complex, a ternary complex that mediates translation termination in response to the termination codons UAA, UAG and UGA. GSPT2/ERF3B mediates ETF1/ERF1 delivery to stop codons: The eRF1-eRF3-GTP complex binds to a stop codon in the ribosomal A-site. GTP hydrolysis by GSPT2/ERF3B induces a conformational change that leads to its dissociation, permitting ETF1/ERF1 to accommodate fully in the A-site. Component of the transient SURF complex which recruits UPF1 to stalled ribosomes in the context of nonsense-mediated decay (NMD) of mRNAs containing premature stop codons. This chain is Eukaryotic peptide chain release factor GTP-binding subunit ERF3B (GSPT2), found in Pongo abelii (Sumatran orangutan).